The chain runs to 382 residues: Lipid-A-disaccharide synthase (382 aa).

It belongs to the LpxB family.

It carries out the reaction 2-N,3-O-bis[(3R)-3-hydroxytetradecanoyl]-alpha-D-glucosaminyl 1-phosphate + UDP-2-N,3-O-bis[(3R)-3-hydroxytetradecanoyl]-alpha-D-glucosamine = lipid A disaccharide (E. coli) + UDP + H(+). The catalysed reaction is a lipid X + a UDP-2-N,3-O-bis[(3R)-3-hydroxyacyl]-alpha-D-glucosamine = a lipid A disaccharide + UDP + H(+). Its pathway is glycolipid biosynthesis; lipid IV(A) biosynthesis; lipid IV(A) from (3R)-3-hydroxytetradecanoyl-[acyl-carrier-protein] and UDP-N-acetyl-alpha-D-glucosamine: step 5/6. In terms of biological role, condensation of UDP-2,3-diacylglucosamine and 2,3-diacylglucosamine-1-phosphate to form lipid A disaccharide, a precursor of lipid A, a phosphorylated glycolipid that anchors the lipopolysaccharide to the outer membrane of the cell. The protein is Lipid-A-disaccharide synthase of Sodalis glossinidius (strain morsitans).